We begin with the raw amino-acid sequence, 273 residues long: MSLTLAIYGKGGIGKSTTSSNLSAALALKGAKVLQIGCDPKHDSTFALTGMLQPTVIDVLTEVDFHHEEVSVEDVVHTGFAGVDTLESGGPPAGSGCGGYVVGETVKLLHEFGLYDKYDVIVFDVLGDVVCGGFSAPLNYADYGVIIACNDFDSIFAANRLCLAIKQKSARYRVELAGIIANRVDYELGGGTTLLEQFAETVGTQIIGRVPYHDLIRRSRLMGKTLFEMEGPGKEECTTPFLEMAEYLLNRPRSTVPKPMGDREIFNVIGGWR.

Residues 12 to 17 and Lys-41 contribute to the ATP site; that span reads GIGKST. Ser-16 contributes to the Mg(2+) binding site. [4Fe-4S] cluster contacts are provided by Cys-97 and Cys-131. ATP is bound at residue 182–183; the sequence is NR.

Belongs to the NifH/BchL/ChlL family. As to quaternary structure, homodimer. Protochlorophyllide reductase is composed of three subunits; BchL, BchN and BchB. The cofactor is [4Fe-4S] cluster.

The enzyme catalyses chlorophyllide a + oxidized 2[4Fe-4S]-[ferredoxin] + 2 ADP + 2 phosphate = protochlorophyllide a + reduced 2[4Fe-4S]-[ferredoxin] + 2 ATP + 2 H2O. It participates in porphyrin-containing compound metabolism; bacteriochlorophyll biosynthesis (light-independent). Functionally, component of the dark-operative protochlorophyllide reductase (DPOR) that uses Mg-ATP and reduced ferredoxin to reduce ring D of protochlorophyllide (Pchlide) to form chlorophyllide a (Chlide). This reaction is light-independent. The L component serves as a unique electron donor to the NB-component of the complex, and binds Mg-ATP. The protein is Light-independent protochlorophyllide reductase iron-sulfur ATP-binding protein of Roseiflexus castenholzii (strain DSM 13941 / HLO8).